A 217-amino-acid polypeptide reads, in one-letter code: MQFWRKQMSEIQHFSQQDIEILGEQTLYEGFFTLKRIQFKHKLFAGGQSGVVTRELLIKGAASAVIAYDPKEDSVILVEQVRIGAAYHPESHRSPWLLELIAGMVEKGEKPEDVALRESEEEAGIQVKNLTHCLSVWDSPGGIVERIHLFAGEVDSAQAKGIHGLAEENEDIKVHVVKREQAYQWMCEGKIDNGIAVIGLQWLQLNYAQLQQSWKRS.

Substrate-binding positions include 31–32, 54–55, and R82; these read FF and RE. The Nudix hydrolase domain occupies 58–204; the sequence is IKGAASAVIA…IAVIGLQWLQ (147 aa). Residue A102 coordinates Mg(2+). Residues 103–124 carry the Nudix box motif; that stretch reads GMVEKGEKPEDVALRESEEEAG. M104 is a binding site for substrate. Residues E118 and E122 each contribute to the Mg(2+) site. Residues 139 to 141 and E145 each bind substrate; that span reads SPG. E168 functions as the Proton acceptor in the catalytic mechanism. E170 lines the Mg(2+) pocket.

It belongs to the Nudix hydrolase family. NudF subfamily. Mg(2+) is required as a cofactor.

It carries out the reaction ADP-D-ribose + H2O = D-ribose 5-phosphate + AMP + 2 H(+). Acts on ADP-mannose and ADP-glucose as well as ADP-ribose. Prevents glycogen biosynthesis. The reaction catalyzed by this enzyme is a limiting step of the gluconeogenic process. In Haemophilus influenzae (strain ATCC 51907 / DSM 11121 / KW20 / Rd), this protein is ADP-ribose pyrophosphatase (nudF).